Here is a 1658-residue protein sequence, read N- to C-terminus: Protein TIC 214 (1658 aa).

Helical transmembrane passes span 28-48 (FGLY…ILTI), 52-72 (LLGG…GQLI), 82-102 (IYVM…YMLF), 130-150 (IFLD…SPVF), 165-185 (ISFV…FINL), and 199-219 (VNYP…ILAL).

Belongs to the TIC214 family. As to quaternary structure, part of the Tic complex.

The protein resides in the plastid. The protein localises to the chloroplast inner membrane. In terms of biological role, involved in protein precursor import into chloroplasts. May be part of an intermediate translocation complex acting as a protein-conducting channel at the inner envelope. The polypeptide is Protein TIC 214 (Huperzia lucidula (Shining clubmoss)).